The primary structure comprises 211 residues: FMN-dependent NADH:quinone oxidoreductase (211 aa).

FMN contacts are provided by residues Ser-10, Ser-16 to Ser-18, and Thr-138 to Gly-141.

The protein belongs to the azoreductase type 1 family. Homodimer. The cofactor is FMN.

It carries out the reaction 2 a quinone + NADH + H(+) = 2 a 1,4-benzosemiquinone + NAD(+). It catalyses the reaction N,N-dimethyl-1,4-phenylenediamine + anthranilate + 2 NAD(+) = 2-(4-dimethylaminophenyl)diazenylbenzoate + 2 NADH + 2 H(+). Quinone reductase that provides resistance to thiol-specific stress caused by electrophilic quinones. In terms of biological role, also exhibits azoreductase activity. Catalyzes the reductive cleavage of the azo bond in aromatic azo compounds to the corresponding amines. In Frankia alni (strain DSM 45986 / CECT 9034 / ACN14a), this protein is FMN-dependent NADH:quinone oxidoreductase.